We begin with the raw amino-acid sequence, 315 residues long: Cytochrome bo(3) ubiquinol oxidase subunit 2 (315 aa).

The first 24 residues, 1-24 (MRLRKYNKSLGWLSLFAGTVLLSG), serve as a signal peptide directing secretion. The N-palmitoyl cysteine moiety is linked to residue Cys25. Residue Cys25 is the site of S-diacylglycerol cysteine attachment. Residues 25-50 (CNSALLDPKGQIGLEQRSLILTAFGL) lie on the Periplasmic side of the membrane. A helical transmembrane segment spans residues 51–68 (MLIVVIPAILMAVGFAWK). The Cytoplasmic portion of the chain corresponds to 69–92 (YRASNKDAKYSPNWSHSNKVEAVV). A helical membrane pass occupies residues 93–111 (WTVPILIIIFLAVLTWKTT). Residues 112–315 (HALEPSKPLA…MDMSHAESAH (204 aa)) lie on the Periplasmic side of the membrane. Positions 288–315 (MDMTQPEGEHSAHEGMEGMDMSHAESAH) are disordered. The span at 294 to 315 (EGEHSAHEGMEGMDMSHAESAH) shows a compositional bias: basic and acidic residues.

It belongs to the cytochrome c oxidase subunit 2 family. As to quaternary structure, heterooctamer of two A chains, two B chains, two C chains and two D chains.

Its subcellular location is the cell inner membrane. Its function is as follows. Cytochrome bo(3) ubiquinol terminal oxidase is the component of the aerobic respiratory chain of E.coli that predominates when cells are grown at high aeration. Has proton pump activity across the membrane in addition to electron transfer, pumping 2 protons/electron. This is Cytochrome bo(3) ubiquinol oxidase subunit 2 (cyoA) from Escherichia coli O6:H1 (strain CFT073 / ATCC 700928 / UPEC).